A 404-amino-acid chain; its full sequence is S-adenosylmethionine synthase (404 aa).

An ATP-binding site is contributed by 139–144; that stretch reads GKGSTD.

Belongs to the AdoMet synthase 2 family. It depends on Mg(2+) as a cofactor.

The catalysed reaction is L-methionine + ATP + H2O = S-adenosyl-L-methionine + phosphate + diphosphate. The protein operates within amino-acid biosynthesis; S-adenosyl-L-methionine biosynthesis; S-adenosyl-L-methionine from L-methionine: step 1/1. Its function is as follows. Catalyzes the formation of S-adenosylmethionine from methionine and ATP. In Saccharolobus islandicus (strain Y.N.15.51 / Yellowstone #2) (Sulfolobus islandicus), this protein is S-adenosylmethionine synthase.